The following is a 1088-amino-acid chain: RNA-directed RNA polymerase (1088 aa).

In terms of domain architecture, RdRp catalytic spans 501–687; it reads LSYGDVTRFL…AKRYIAGGKI (187 aa).

Belongs to the reoviridae RNA-directed RNA polymerase family. Interacts with VP3 (Potential). Interacts with VP2; this interaction activates VP1. Interacts with NSP5; this interaction is probably necessary for the formation of functional virus factories. Interacts with NSP2; this interaction is weak. The cofactor is Mg(2+).

Its subcellular location is the virion. It catalyses the reaction RNA(n) + a ribonucleoside 5'-triphosphate = RNA(n+1) + diphosphate. RNA-directed RNA polymerase that is involved in both transcription and genome replication. Together with VP3 capping enzyme, forms an enzyme complex positioned near the channels situated at each of the five-fold vertices of the core. Following infection, the outermost layer of the virus is lost, leaving a double-layered particle (DLP) made up of the core and VP6 shell. VP1 then catalyzes the transcription of fully conservative plus-strand genomic RNAs that are extruded through the DLP's channels into the cytoplasm where they function as mRNAs for translation of viral proteins. One copy of each of the viral (+)RNAs is also recruited during core assembly, together with newly synthesized polymerase complexes and VP2. The polymerase of these novo-formed particles catalyzes the synthesis of complementary minus-strands leading to dsRNA formation. To do so, the polymerase specifically recognizes and binds 4 bases 5'-UGUG-3' in the conserved 3'-sequence of plus-strand RNA templates. VP2 presumably activates the autoinhibited VP1-RNA complex to coordinate packaging and genome replication. Once dsRNA synthesis is complete, the polymerase switches to the transcriptional mode, thus providing secondary transcription. The protein is RNA-directed RNA polymerase of Homo sapiens (Human).